We begin with the raw amino-acid sequence, 729 residues long: DNA topoisomerase 3 (729 aa).

The 134-residue stretch at 3–136 folds into the Toprim domain; it reads KSVVIAEKPS…IKRLWISSVT (134 aa). 2 residues coordinate Mg(2+): Glu-9 and Asp-105. The Topo IA-type catalytic domain occupies 153 to 594; sequence YDNLYASAVA…EMKNYTKEIV (442 aa). Positions 187-192 are interaction with DNA; that stretch reads NCGRVQ. Tyr-310 functions as the O-(5'-phospho-DNA)-tyrosine intermediate in the catalytic mechanism. Positions 686–713 are enriched in basic and acidic residues; sequence ERRKKESGNKADKRDVQKYMKQQKKEEE. The interval 686–718 is disordered; it reads ERRKKESGNKADKRDVQKYMKQQKKEEEPLNNP.

The protein belongs to the type IA topoisomerase family. The cofactor is Mg(2+).

The enzyme catalyses ATP-independent breakage of single-stranded DNA, followed by passage and rejoining.. Its function is as follows. Releases the supercoiling and torsional tension of DNA, which is introduced during the DNA replication and transcription, by transiently cleaving and rejoining one strand of the DNA duplex. Introduces a single-strand break via transesterification at a target site in duplex DNA. The scissile phosphodiester is attacked by the catalytic tyrosine of the enzyme, resulting in the formation of a DNA-(5'-phosphotyrosyl)-enzyme intermediate and the expulsion of a 3'-OH DNA strand. The free DNA strand then undergoes passage around the unbroken strand, thus removing DNA supercoils. Finally, in the religation step, the DNA 3'-OH attacks the covalent intermediate to expel the active-site tyrosine and restore the DNA phosphodiester backbone. The protein is DNA topoisomerase 3 of Bacillus cereus (strain ZK / E33L).